An 80-amino-acid polypeptide reads, in one-letter code: ATP synthase F(1) complex subunit delta, mitochondrial (80 aa).

Residues 1-22 (MLPATLLRXSGLGRVVRQARAY) constitute a mitochondrion transit peptide.

Belongs to the ATPase epsilon chain family. In terms of assembly, component of the ATP synthase complex composed at least of ATP5F1A/subunit alpha, ATP5F1B/subunit beta, ATP5MC1/subunit c (homooctomer), MT-ATP6/subunit a, MT-ATP8/subunit 8, ATP5ME/subunit e, ATP5MF/subunit f, ATP5MG/subunit g, ATP5MK/subunit k, ATP5MJ/subunit j, ATP5F1C/subunit gamma, ATP5F1D/subunit delta, ATP5F1E/subunit epsilon, ATP5PF/subunit F6, ATP5PB/subunit b, ATP5PD/subunit d, ATP5PO/subunit OSCP. ATP synthase complex consists of a soluble F(1) head domain (subunits alpha(3) and beta(3)) - the catalytic core - and a membrane F(0) domain - the membrane proton channel (subunits c, a, 8, e, f, g, k and j). These two domains are linked by a central stalk (subunits gamma, delta, and epsilon) rotating inside the F1 region and a stationary peripheral stalk (subunits F6, b, d, and OSCP). Component of a complex composed at least by ATPIF1, ATP5F1A, ATP5F1B, ATP5F1C AND ATP5F1E.

The protein resides in the mitochondrion. It localises to the mitochondrion inner membrane. Subunit delta, of the mitochondrial membrane ATP synthase complex (F(1)F(0) ATP synthase or Complex V) that produces ATP from ADP in the presence of a proton gradient across the membrane which is generated by electron transport complexes of the respiratory chain. ATP synthase complex consist of a soluble F(1) head domain - the catalytic core - and a membrane F(1) domain - the membrane proton channel. These two domains are linked by a central stalk rotating inside the F(1) region and a stationary peripheral stalk. During catalysis, ATP synthesis in the catalytic domain of F(1) is coupled via a rotary mechanism of the central stalk subunits to proton translocation. In vivo, can only synthesize ATP although its ATP hydrolase activity can be activated artificially in vitro. With the central stalk subunit gamma, is essential for the biogenesis of F(1) catalytic part of the ATP synthase complex namely in the formation of F1 assembly intermediate. This Sus scrofa (Pig) protein is ATP synthase F(1) complex subunit delta, mitochondrial.